The following is a 419-amino-acid chain: Protein farnesyltransferase subunit beta (419 aa).

5 PFTB repeats span residues 68–109 (EDNT…ITLG), 119–160 (RNKL…SVLN), 167–208 (IKNV…ILIG), 215–256 (LPRL…ALLQ), and 329–371 (SIAL…SLCQ). Residues 193-196 (HGGY) and 235-238 (RTNK) contribute to the (2E,6E)-farnesyl diphosphate site. Zn(2+) is bound by residues D241 and C243. 244 to 247 (YSFW) is a binding site for (2E,6E)-farnesyl diphosphate. Residue H359 coordinates Zn(2+).

This sequence belongs to the protein prenyltransferase subunit beta family. In terms of assembly, heterodimer of FTA and FTB. Requires Zn(2+) as cofactor.

It carries out the reaction L-cysteinyl-[protein] + (2E,6E)-farnesyl diphosphate = S-(2E,6E)-farnesyl-L-cysteinyl-[protein] + diphosphate. Its function is as follows. Catalyzes the transfer of a farnesyl moiety from farnesyl diphosphate to a cysteine at the fourth position from the C-terminus of several proteins. The beta subunit FTB is responsible for peptide-binding. This is Protein farnesyltransferase subunit beta (FTB) from Pisum sativum (Garden pea).